We begin with the raw amino-acid sequence, 219 residues long: Thymidylate kinase (219 aa).

7 to 14 is a binding site for ATP; the sequence is GIDGAGKS.

The protein belongs to the thymidylate kinase family.

The enzyme catalyses dTMP + ATP = dTDP + ADP. Its function is as follows. Phosphorylation of dTMP to form dTDP in both de novo and salvage pathways of dTTP synthesis. The sequence is that of Thymidylate kinase from Chlorobium phaeobacteroides (strain DSM 266 / SMG 266 / 2430).